We begin with the raw amino-acid sequence, 261 residues long: Indole-3-glycerol phosphate synthase (261 aa).

This sequence belongs to the TrpC family.

The enzyme catalyses 1-(2-carboxyphenylamino)-1-deoxy-D-ribulose 5-phosphate + H(+) = (1S,2R)-1-C-(indol-3-yl)glycerol 3-phosphate + CO2 + H2O. Its pathway is amino-acid biosynthesis; L-tryptophan biosynthesis; L-tryptophan from chorismate: step 4/5. The polypeptide is Indole-3-glycerol phosphate synthase (Campylobacter curvus (strain 525.92)).